Reading from the N-terminus, the 287-residue chain is Bifunctional protein FolD (287 aa).

Residues 165–167 (GRG), T192, and V233 each bind NADP(+).

It belongs to the tetrahydrofolate dehydrogenase/cyclohydrolase family. In terms of assembly, homodimer.

It carries out the reaction (6R)-5,10-methylene-5,6,7,8-tetrahydrofolate + NADP(+) = (6R)-5,10-methenyltetrahydrofolate + NADPH. It catalyses the reaction (6R)-5,10-methenyltetrahydrofolate + H2O = (6R)-10-formyltetrahydrofolate + H(+). It functions in the pathway one-carbon metabolism; tetrahydrofolate interconversion. Catalyzes the oxidation of 5,10-methylenetetrahydrofolate to 5,10-methenyltetrahydrofolate and then the hydrolysis of 5,10-methenyltetrahydrofolate to 10-formyltetrahydrofolate. The protein is Bifunctional protein FolD of Cutibacterium acnes (strain DSM 16379 / KPA171202) (Propionibacterium acnes).